Consider the following 102-residue polypeptide: Small ribosomal subunit protein eS24 (102 aa).

The protein belongs to the eukaryotic ribosomal protein eS24 family.

This chain is Small ribosomal subunit protein eS24, found in Methanococcus aeolicus (strain ATCC BAA-1280 / DSM 17508 / OCM 812 / Nankai-3).